A 399-amino-acid polypeptide reads, in one-letter code: Presilphiperfolan-8-beta-ol synthase (399 aa).

Residues 1–60 (MAIPALEPQLHDADTSSNNMSSNSTDSGYDTNSTTPLEKSEKPNTQELKQQQLDPKRPPF) form a disordered region. The segment covering 15–27 (TSSNNMSSNSTDS) has biased composition (low complexity). Positions 28 to 37 (GYDTNSTTPL) are enriched in polar residues. The Mg(2+) site is built by D141, N285, and S289. The short motif at 141 to 145 (DDQFD) is the DDXXD motif element. Positions 373 and 374 each coordinate (2E,6E)-farnesyl diphosphate.

It belongs to the terpene synthase family. Requires Mg(2+) as cofactor.

The catalysed reaction is (2E,6E)-farnesyl diphosphate + H2O = presilphiperfolan-8beta-ol + diphosphate. It functions in the pathway secondary metabolite biosynthesis. Presilphiperfolan-8-beta-ol synthase; part of the gene cluster that mediates the biosynthesis of botrydial. Botrydial is necessary for colonization of plant tissue by the T4 strain. It is a strain-dependent virulence factor since highly aggressive strains like SAS56 or B05 still retain substantial virulence when botrydial synthesis is impaired, since they produce also botcinic acid. The first step of botrydial biosynthesis is performed by the sesquiterpene synthase BOT2 which catalyzes the cyclization of farnesyl diphosphate (FPP) to presilphiperfolan-8-beta-ol (PSP). The cytochrome P450 monooxygenase BOT4 then catalyzes the hydroxylation at C-4 to give a probotryane intermediate. Acetylation of the hydroxyl at C-4 is carried out by the acetyltransferase BOT5, followed by the combined action of the P450 monooxygenases BOT3 and BOT1, to yield finally the glycol, via the regio- and stereospecific hydroxylations at C-10 and C-15 of the probotryane intermediates, respectively. The cleavage of the C10-C15 bond of probotryane skeleton is an intriguing and chemically important reaction, which could be mediated by some of the monooxygenases or by a combination of them. It is possible that either BOT3 or BOT1 would oxidize either the 10- or the 15-hydroxy group to the hydroperoxide derivative, which would then undergo heterolytic fragmentation to give the dialdehyde botrydial. Finally, the dehydrogenase BOT7 might be involved in the conversion of botrydial to dihydrobotrydial. The chain is Presilphiperfolan-8-beta-ol synthase (BOT2) from Botryotinia fuckeliana (Noble rot fungus).